The sequence spans 222 residues: 7-cyano-7-deazaguanine synthase (222 aa).

Residue 8–18 (LSGGMDSTTLA) participates in ATP binding. Cys188, Cys196, Cys199, and Cys202 together coordinate Zn(2+).

Belongs to the QueC family. Zn(2+) serves as cofactor.

The catalysed reaction is 7-carboxy-7-deazaguanine + NH4(+) + ATP = 7-cyano-7-deazaguanine + ADP + phosphate + H2O + H(+). It functions in the pathway purine metabolism; 7-cyano-7-deazaguanine biosynthesis. Functionally, catalyzes the ATP-dependent conversion of 7-carboxy-7-deazaguanine (CDG) to 7-cyano-7-deazaguanine (preQ(0)). This is 7-cyano-7-deazaguanine synthase from Methanoculleus marisnigri (strain ATCC 35101 / DSM 1498 / JR1).